The sequence spans 520 residues: 2-methylcitrate dehydratase, mitochondrial (520 aa).

Residues 1–37 (MRAFRSAANFGAASNIYRKSFTPASIASNRFVSARMS) constitute a mitochondrion transit peptide.

This sequence belongs to the PrpD family. In terms of assembly, monomer.

Its subcellular location is the mitochondrion. It carries out the reaction (2S,3S)-2-methylcitrate = 2-methyl-cis-aconitate + H2O. It functions in the pathway organic acid metabolism; propanoate degradation. With respect to regulation, several bivalent metal ions, such as nickel, copper, zinc, mercury, and lead, inhibit the activity to some extent. Inhibited by structural analogs such as citrate, cis-aconitate, isocitrate, 2-methylisocitrate, tricarballylate and fluorocitrate, but not by trans-aconitate or adipate. Its function is as follows. Component of the methylcitrate cycle that catalyzes the dehydration of 2-methylcitrate to 2-methyl-cis-aconitate. The methylcitrate cycle is a metabolic pathway for the consumption of propionic acid. The polypeptide is 2-methylcitrate dehydratase, mitochondrial (Yarrowia lipolytica (strain CLIB 122 / E 150) (Yeast)).